The following is a 453-amino-acid chain: Trigger factor (453 aa).

One can recognise a PPIase FKBP-type domain in the interval 171–256 (GDRVTVSFKG…ATLVEAPKDT (86 aa)).

Belongs to the FKBP-type PPIase family. Tig subfamily.

It localises to the cytoplasm. The catalysed reaction is [protein]-peptidylproline (omega=180) = [protein]-peptidylproline (omega=0). Functionally, involved in protein export. Acts as a chaperone by maintaining the newly synthesized protein in an open conformation. Functions as a peptidyl-prolyl cis-trans isomerase. The sequence is that of Trigger factor from Rhodopseudomonas palustris (strain BisA53).